Reading from the N-terminus, the 276-residue chain is NADPH-dependent 7-cyano-7-deazaguanine reductase (276 aa).

83–85 (IES) lines the substrate pocket. 85 to 86 (SK) lines the NADPH pocket. The active-site Thioimide intermediate is C184. Residue D191 is the Proton donor of the active site. 223 to 224 (HE) serves as a coordination point for substrate. 252-253 (RG) contributes to the NADPH binding site.

It belongs to the GTP cyclohydrolase I family. QueF type 2 subfamily. As to quaternary structure, homodimer.

The protein resides in the cytoplasm. The enzyme catalyses 7-aminomethyl-7-carbaguanine + 2 NADP(+) = 7-cyano-7-deazaguanine + 2 NADPH + 3 H(+). It functions in the pathway tRNA modification; tRNA-queuosine biosynthesis. Functionally, catalyzes the NADPH-dependent reduction of 7-cyano-7-deazaguanine (preQ0) to 7-aminomethyl-7-deazaguanine (preQ1). In Pseudomonas putida (strain ATCC 700007 / DSM 6899 / JCM 31910 / BCRC 17059 / LMG 24140 / F1), this protein is NADPH-dependent 7-cyano-7-deazaguanine reductase.